The primary structure comprises 93 residues: Large ribosomal subunit protein eL29 (93 aa).

Residues 1–31 (MAKSKNHSTHHKNRKDHRNGIKKAVVHKKTS) are compositionally biased toward basic residues. Residues 1-33 (MAKSKNHSTHHKNRKDHRNGIKKAVVHKKTSSK) are disordered.

The protein belongs to the eukaryotic ribosomal protein eL29 family.

The protein is Large ribosomal subunit protein eL29 (rpl29) of Dictyostelium discoideum (Social amoeba).